A 334-amino-acid polypeptide reads, in one-letter code: Aspartate carbamoyltransferase catalytic subunit (334 aa).

Residues arginine 70 and threonine 71 each contribute to the carbamoyl phosphate site. Lysine 98 provides a ligand contact to L-aspartate. The carbamoyl phosphate site is built by arginine 120, histidine 150, and glutamine 153. Positions 183 and 238 each coordinate L-aspartate. Carbamoyl phosphate-binding residues include glycine 279 and proline 280.

It belongs to the aspartate/ornithine carbamoyltransferase superfamily. ATCase family. As to quaternary structure, heterododecamer (2C3:3R2) of six catalytic PyrB chains organized as two trimers (C3), and six regulatory PyrI chains organized as three dimers (R2).

The catalysed reaction is carbamoyl phosphate + L-aspartate = N-carbamoyl-L-aspartate + phosphate + H(+). It functions in the pathway pyrimidine metabolism; UMP biosynthesis via de novo pathway; (S)-dihydroorotate from bicarbonate: step 2/3. Its function is as follows. Catalyzes the condensation of carbamoyl phosphate and aspartate to form carbamoyl aspartate and inorganic phosphate, the committed step in the de novo pyrimidine nucleotide biosynthesis pathway. This Marinomonas sp. (strain MWYL1) protein is Aspartate carbamoyltransferase catalytic subunit.